A 123-amino-acid chain; its full sequence is Small ribosomal subunit protein uS12 (123 aa).

The residue at position 89 (Asp-89) is a 3-methylthioaspartic acid. Residues 100–123 (GSLDTSGVKGRNQGRSKYGTKKPK) form a disordered region. Basic residues predominate over residues 111-123 (NQGRSKYGTKKPK).

The protein belongs to the universal ribosomal protein uS12 family. In terms of assembly, part of the 30S ribosomal subunit. Contacts proteins S8 and S17. May interact with IF1 in the 30S initiation complex.

With S4 and S5 plays an important role in translational accuracy. Its function is as follows. Interacts with and stabilizes bases of the 16S rRNA that are involved in tRNA selection in the A site and with the mRNA backbone. Located at the interface of the 30S and 50S subunits, it traverses the body of the 30S subunit contacting proteins on the other side and probably holding the rRNA structure together. The combined cluster of proteins S8, S12 and S17 appears to hold together the shoulder and platform of the 30S subunit. This is Small ribosomal subunit protein uS12 from Pseudomonas syringae pv. syringae (strain B728a).